The following is a 71-amino-acid chain: Large ribosomal subunit protein uL29 (71 aa).

Residues 32-51 (GVNKSTGGAPSNPGKISETK) form a disordered region.

The protein belongs to the universal ribosomal protein uL29 family.

The chain is Large ribosomal subunit protein uL29 from Methanococcus maripaludis (strain DSM 14266 / JCM 13030 / NBRC 101832 / S2 / LL).